Reading from the N-terminus, the 249-residue chain is tRNA pseudouridine synthase A (249 aa).

D53 functions as the Nucleophile in the catalytic mechanism. Y111 is a binding site for substrate.

Belongs to the tRNA pseudouridine synthase TruA family. Homodimer.

The enzyme catalyses uridine(38/39/40) in tRNA = pseudouridine(38/39/40) in tRNA. Its function is as follows. Formation of pseudouridine at positions 38, 39 and 40 in the anticodon stem and loop of transfer RNAs. This chain is tRNA pseudouridine synthase A, found in Streptococcus equi subsp. equi (strain 4047).